A 215-amino-acid chain; its full sequence is UPF0319 protein VV2_0960 (215 aa).

The N-terminal stretch at 1 to 21 (MNIIKPLTCILAMSISGLATA) is a signal peptide.

This sequence belongs to the UPF0319 family.

The sequence is that of UPF0319 protein VV2_0960 from Vibrio vulnificus (strain CMCP6).